Reading from the N-terminus, the 87-residue chain is Lantipeptide prochlorosin 3.3 (87 aa).

The propeptide occupies 1–64 (MSEEQLKAFI…DEELEAASGG (64 aa)). Position 67 is a 2,3-didehydrobutyrine (Thr67). Residues 75–85 (TAGCYGGTKMC) constitute a cross-link (beta-methyllanthionine (Thr-Cys)). Residues 78 to 82 (CYGGT) constitute a cross-link (beta-methyllanthionine (Cys-Thr)).

Cross-links are proved in vitro, when coepressed in E.coli with the ProcM lanthionine synthetase. Post-translationally, the beta-methyllanthionine residues have a DL configuration (with 2S,3S,6R stereochemistry). In terms of processing, maturation of prochlorosin involves the enzymatic conversion of Thr, and Ser into dehydrated AA and the formation of thioether bonds with cysteines. This is followed by membrane translocation and cleavage of the modified precursor.

It is found in the secreted. Its function is as follows. Lanthionine-containing peptide (lantipeptide) with unknown function. Does not show antibiotic activity against Lactococcus lactis 117 and Bacillus subtilis 6633 bacteria. Organisms that produce this peptide live in oligotrophic environments at very dilute concentrations, suggesting this peptide is not secreted to influence other bacteria. The protein is Lantipeptide prochlorosin 3.3 of Prochlorococcus marinus (strain MIT 9313).